We begin with the raw amino-acid sequence, 72 residues long: Subtilisin-chymotrypsin inhibitor-2B (72 aa).

It belongs to the protease inhibitor I13 (potato type I serine protease inhibitor) family.

In terms of biological role, inhibits both subtilisin and chymotrypsin. This is Subtilisin-chymotrypsin inhibitor-2B from Hordeum vulgare (Barley).